Here is a 395-residue protein sequence, read N- to C-terminus: Protein BTN1 (395 aa).

The N-terminal stretch at 1–31 (MQLEPAHLVYAAFWTFGLVNNVLYVVILTAA) is a signal peptide. The next 10 helical transmembrane spans lie at 43 to 63 (VVLLADVLPSFLIKLAAPFFI), 74 to 94 (LLVGLSTVGMMSVSLASPLFL), 96 to 116 (LVGVVLASFSSGLGEVTFLQL), 134 to 154 (GAGLVGSGLFMLLTTVLGVSV), 158 to 178 (LLVFAFFPLAFLGVYFYLLPP), 222 to 242 (PLVMPYMLPLFLVYFSEYTIN), 261 to 278 (FRDVYVTYGTLYQLGVFI), 291 to 311 (IMIPSVLQFANLVFCIAQSMS), 313 to 333 (ILPNVWLVFILIFYEGLLGGA), and 355 to 375 (LGSVGMSDSAGIVLAGLVSLW).

Belongs to the battenin family.

Its subcellular location is the vacuole membrane. In terms of biological role, involved in vacuolar transport and vacuole pH homeostasis. Also required for cytokinesis. This chain is Protein BTN1 (BTN1), found in Yarrowia lipolytica (strain CLIB 122 / E 150) (Yeast).